We begin with the raw amino-acid sequence, 417 residues long: Sulfate adenylyltransferase (417 aa).

This sequence belongs to the sulfate adenylyltransferase family.

The enzyme catalyses sulfate + ATP + H(+) = adenosine 5'-phosphosulfate + diphosphate. Its pathway is sulfur metabolism; hydrogen sulfide biosynthesis; sulfite from sulfate: step 1/3. This Psychrobacter cryohalolentis (strain ATCC BAA-1226 / DSM 17306 / VKM B-2378 / K5) protein is Sulfate adenylyltransferase.